Here is a 430-residue protein sequence, read N- to C-terminus: Enolase (430 aa).

Glutamine 167 provides a ligand contact to (2R)-2-phosphoglycerate. Glutamate 209 functions as the Proton donor in the catalytic mechanism. Positions 246, 287, and 314 each coordinate Mg(2+). (2R)-2-phosphoglycerate is bound by residues lysine 339, arginine 368, and serine 369. The Proton acceptor role is filled by lysine 339.

This sequence belongs to the enolase family. Requires Mg(2+) as cofactor.

The protein localises to the cytoplasm. The protein resides in the secreted. It localises to the cell surface. It catalyses the reaction (2R)-2-phosphoglycerate = phosphoenolpyruvate + H2O. The protein operates within carbohydrate degradation; glycolysis; pyruvate from D-glyceraldehyde 3-phosphate: step 4/5. In terms of biological role, catalyzes the reversible conversion of 2-phosphoglycerate (2-PG) into phosphoenolpyruvate (PEP). It is essential for the degradation of carbohydrates via glycolysis. This is Enolase from Synechococcus sp. (strain ATCC 27144 / PCC 6301 / SAUG 1402/1) (Anacystis nidulans).